Reading from the N-terminus, the 1097-residue chain is Leukemia inhibitory factor receptor (1097 aa).

An N-terminal signal peptide occupies residues 1 to 44 (MMNISLRLRRPPWMVDSNGRRMTSHFQWLLLTFILLYLMNQVTS). At 45–833 (EKRGAPRDLK…SMFVVTKENS (789 aa)) the chain is on the extracellular side. One can recognise a Fibronectin type-III 1 domain in the interval 46–131 (KRGAPRDLKC…ISKFTLNEKN (86 aa)). Cystine bridges form between Cys-55/Cys-65 and Cys-82/Cys-90. Asn-85, Asn-131, Asn-143, Asn-191, Asn-243, and Asn-303 each carry an N-linked (GlcNAc...) asparagine glycan. Cys-213 and Cys-270 are joined by a disulfide. 5 consecutive Fibronectin type-III domains span residues 332–434 (PPDI…VYPR), 435–534 (IPTS…TEAI), 538–629 (GPDT…IPND), 627–719 (PNDD…IGYI), and 724–833 (PIVA…KENS). A disulfide bond links Cys-341 and Cys-351. Residues Asn-366, Asn-390, Asn-407, Asn-426, Asn-445, Asn-471, Asn-481, and Asn-489 are each glycosylated (N-linked (GlcNAc...) asparagine). The cysteines at positions 466 and 511 are disulfide-linked. The WSXWS motif signature appears at 519-523 (WSKWS). Residues Asn-572, Asn-652, Asn-663, Asn-680, Asn-729, and Asn-787 are each glycosylated (N-linked (GlcNAc...) asparagine). Residues 834–854 (VGLIIAILIPVAVAVIVGVVT) traverse the membrane as a helical segment. Over 855–1097 (SILCYRKREW…TNFFQNKPND (243 aa)) the chain is Cytoplasmic. Positions 869-877 (FYPDIPNPE) match the Box 1 motif motif. Phosphoserine is present on Ser-927. 2 disordered regions span residues 982-1005 (QPQA…KPQM) and 1022-1097 (LDKA…KPND). Composition is skewed to polar residues over residues 1032–1067 (ANVN…NSRQ) and 1086–1097 (SFTNFFQNKPND). Ser-1044 is subject to Phosphoserine.

The protein belongs to the type I cytokine receptor family. Type 2 subfamily. Heterodimer composed of LIFR and IL6ST. The heterodimer formed by LIFR and IL6ST interacts with the complex formed by CNTF and CNTFR.

The protein resides in the cell membrane. In terms of biological role, signal-transducing molecule. May have a common pathway with IL6ST. The soluble form inhibits the biological activity of LIF by blocking its binding to receptors on target cells. In Canis lupus familiaris (Dog), this protein is Leukemia inhibitory factor receptor (LIFR).